The sequence spans 148 residues: Lysozyme C (148 aa).

A signal peptide spans 1 to 18 (MKALIVLGLVLLSVMVQG). The 130-residue stretch at 19–148 (KVFERCELAR…VRQYVQGCGV (130 aa)) folds into the C-type lysozyme domain. 4 cysteine pairs are disulfide-bonded: cysteine 24/cysteine 146, cysteine 48/cysteine 134, cysteine 83/cysteine 99, and cysteine 95/cysteine 113. Residues glutamate 53 and aspartate 71 contribute to the active site.

Belongs to the glycosyl hydrolase 22 family. Monomer.

It catalyses the reaction Hydrolysis of (1-&gt;4)-beta-linkages between N-acetylmuramic acid and N-acetyl-D-glucosamine residues in a peptidoglycan and between N-acetyl-D-glucosamine residues in chitodextrins.. Functionally, lysozymes have primarily a bacteriolytic function; those in tissues and body fluids are associated with the monocyte-macrophage system and enhance the activity of immunoagents. The sequence is that of Lysozyme C (LYZ) from Gorilla gorilla gorilla (Western lowland gorilla).